We begin with the raw amino-acid sequence, 146 residues long: MLFFGTYDHNLDDKQRLTIPSKMRNKILNSTVYVSKGFEGSLEMRTEEEFEKWSSQILNLSSFNKETRMITREIIANTHEVEIDKIGRIKIPNNLLKLANIEKSVYILGMGDRVEIWDQKSYDNYQNDNSDRMEEIAETIYQGLNK.

SpoVT-AbrB domains lie at 6-49 (TYDH…TEEE) and 78-121 (THEV…DQKS).

It belongs to the MraZ family. In terms of assembly, forms oligomers.

The protein localises to the cytoplasm. It is found in the nucleoid. This chain is Transcriptional regulator MraZ, found in Mesoplasma florum (strain ATCC 33453 / NBRC 100688 / NCTC 11704 / L1) (Acholeplasma florum).